The primary structure comprises 149 residues: Large ribosomal subunit protein uL13 (149 aa).

This sequence belongs to the universal ribosomal protein uL13 family. Part of the 50S ribosomal subunit.

Functionally, this protein is one of the early assembly proteins of the 50S ribosomal subunit, although it is not seen to bind rRNA by itself. It is important during the early stages of 50S assembly. The protein is Large ribosomal subunit protein uL13 of Pelodictyon phaeoclathratiforme (strain DSM 5477 / BU-1).